Reading from the N-terminus, the 347-residue chain is GMP reductase (347 aa).

Alanine 108–alanine 131 serves as a coordination point for NADP(+). The K(+) site is built by glycine 181 and glycine 183. The active-site Thioimidate intermediate is cysteine 186. Isoleucine 216–valine 239 is a binding site for NADP(+).

The protein belongs to the IMPDH/GMPR family. GuaC type 1 subfamily. As to quaternary structure, homotetramer.

It carries out the reaction IMP + NH4(+) + NADP(+) = GMP + NADPH + 2 H(+). Functionally, catalyzes the irreversible NADPH-dependent deamination of GMP to IMP. It functions in the conversion of nucleobase, nucleoside and nucleotide derivatives of G to A nucleotides, and in maintaining the intracellular balance of A and G nucleotides. The protein is GMP reductase of Aliivibrio fischeri (strain MJ11) (Vibrio fischeri).